The chain runs to 208 residues: Protein disulfide-isomerase A3 (208 aa).

Positions 1-44 (RLAPEYEAAATRYGVSGYPTLKDGEEAGAYDGPRTADGIVSHLK) constitute a Thioredoxin 1 domain. Lys44 carries the post-translational modification N6-succinyllysine. The residue at position 49 (Lys49) is an N6-acetyllysine. Thr133 carries the phosphothreonine modification. One can recognise a Thioredoxin 2 domain in the interval 151–208 (SRFLQDYFDGNLKRYLKSEPIPETNDGPVKMDATANDVPSPYEVKGFPTIYFSPANKK). Lys163 carries the post-translational modification N6-acetyllysine.

Belongs to the protein disulfide isomerase family. In terms of assembly, part of the major histocompatibility complex class I (MHC I) peptide loading complex composed of TAP1, TAP2, B2M, MHC heavy chain, TAPBP, PDIA3, and CALR. Interacts with ERP27 and CANX. Interacts with SERPINA2 and SERPINA1. Interacts with ATP2A2. Within the major histocompatibility complex class I (MHC I) peptide loading complex forms reversible disulfide-linked heterodimers with TAPBP as part of its protein folding chaperone activity. This is essential to assist the dynamic assembly of the MHC I complex with high affinity antigens in the endoplasmic reticulum. Post-translationally, phosphorylated. In terms of tissue distribution, in the caput epididymal spermatozoa, detected in the mid-peice and at low levels in the principal piece. In the cauda epididymal spermatozoa, detected at very low levels in the principal piece and not in the mid-piece (at protein level).

The protein localises to the endoplasmic reticulum. Its subcellular location is the endoplasmic reticulum lumen. It localises to the melanosome. The catalysed reaction is Catalyzes the rearrangement of -S-S- bonds in proteins.. Protein disulfide isomerase that catalyzes the formation, isomerization, and reduction or oxidation of disulfide bonds in client proteins and functions as a protein folding chaperone. Core component of the major histocompatibility complex class I (MHC I) peptide loading complex where it functions as an essential folding chaperone for TAPBP. Through TAPBP, assists the dynamic assembly of the MHC I complex with high affinity antigens in the endoplasmic reticulum. Therefore, plays a crucial role in the presentation of antigens to cytotoxic T cells in adaptive immunity. The chain is Protein disulfide-isomerase A3 from Mesocricetus auratus (Golden hamster).